A 221-amino-acid polypeptide reads, in one-letter code: PKHD-type hydroxylase PMN2A_0775 (221 aa).

Residues 80-174 (LIHGVMFTQS…RHVCVGWIQS (95 aa)) form the Fe2OG dioxygenase domain. Fe cation-binding residues include His98, Asp100, and His155. Position 165 (Arg165) interacts with 2-oxoglutarate.

Fe(2+) serves as cofactor. L-ascorbate is required as a cofactor.

This is PKHD-type hydroxylase PMN2A_0775 from Prochlorococcus marinus (strain NATL2A).